We begin with the raw amino-acid sequence, 132 residues long: Small ribosomal subunit protein uS11 (132 aa).

The span at 1-16 shows a compositional bias: basic residues; sequence MAAGMKGKRSRRRKER. A disordered region spans residues 1 to 20; it reads MAAGMKGKRSRRRKERKNVE.

The protein belongs to the universal ribosomal protein uS11 family. Part of the 30S ribosomal subunit. Interacts with proteins S7 and S18. Binds to IF-3.

In terms of biological role, located on the platform of the 30S subunit, it bridges several disparate RNA helices of the 16S rRNA. Forms part of the Shine-Dalgarno cleft in the 70S ribosome. This chain is Small ribosomal subunit protein uS11, found in Clostridium botulinum (strain Kyoto / Type A2).